A 180-amino-acid polypeptide reads, in one-letter code: Inorganic pyrophosphatase (180 aa).

Residues Lys-30, Arg-44, and Tyr-56 each coordinate substrate. Mg(2+) contacts are provided by Asp-66, Asp-71, and Asp-103. Tyr-142 is a substrate binding site.

The protein belongs to the PPase family. In terms of assembly, homohexamer. Requires Mg(2+) as cofactor.

It localises to the cytoplasm. It catalyses the reaction diphosphate + H2O = 2 phosphate + H(+). In terms of biological role, catalyzes the hydrolysis of inorganic pyrophosphate (PPi) forming two phosphate ions. This chain is Inorganic pyrophosphatase, found in Buchnera aphidicola subsp. Schizaphis graminum (strain Sg).